Reading from the N-terminus, the 321-residue chain is HPr kinase/phosphorylase (321 aa).

Catalysis depends on residues histidine 143 and lysine 164. An ATP-binding site is contributed by 158–165 (GKSGVGKS). A Mg(2+)-binding site is contributed by serine 165. The active-site Proton acceptor; for phosphorylation activity. Proton donor; for dephosphorylation activity is aspartate 182. The segment at 206-215 (MEIRGLGILN) is important for the catalytic mechanism of both phosphorylation and dephosphorylation. Mg(2+) is bound at residue glutamate 207. Residue arginine 248 is part of the active site. Positions 269-274 (PVRPGR) are important for the catalytic mechanism of dephosphorylation.

Belongs to the HPrK/P family. In terms of assembly, homohexamer. Requires Mg(2+) as cofactor.

The enzyme catalyses [HPr protein]-L-serine + ATP = [HPr protein]-O-phospho-L-serine + ADP + H(+). It catalyses the reaction [HPr protein]-O-phospho-L-serine + phosphate + H(+) = [HPr protein]-L-serine + diphosphate. Its function is as follows. Catalyzes the ATP- as well as the pyrophosphate-dependent phosphorylation of a specific serine residue in HPr, a phosphocarrier protein of the phosphoenolpyruvate-dependent sugar phosphotransferase system (PTS). HprK/P also catalyzes the pyrophosphate-producing, inorganic phosphate-dependent dephosphorylation (phosphorolysis) of seryl-phosphorylated HPr (P-Ser-HPr). The sequence is that of HPr kinase/phosphorylase from Leptospira interrogans serogroup Icterohaemorrhagiae serovar copenhageni (strain Fiocruz L1-130).